Reading from the N-terminus, the 746-residue chain is Polyribonucleotide nucleotidyltransferase (746 aa).

Mg(2+)-binding residues include D490 and D496. Positions 557–619 (PRIETMIIGK…ATIDAAVKAI (63 aa)) constitute a KH domain. Residues 629–699 (GEVYEGKISS…KTGKFKLSRK (71 aa)) enclose the S1 motif domain. The disordered stretch occupies residues 701-746 (LLPKPEGYEERPPRPERGERGPRQDRGDRGPRQDRGDRGPRREYRD). Residues 706–746 (EGYEERPPRPERGERGPRQDRGDRGPRQDRGDRGPRREYRD) are compositionally biased toward basic and acidic residues.

Belongs to the polyribonucleotide nucleotidyltransferase family. It depends on Mg(2+) as a cofactor.

The protein resides in the cytoplasm. It carries out the reaction RNA(n+1) + phosphate = RNA(n) + a ribonucleoside 5'-diphosphate. In terms of biological role, involved in mRNA degradation. Catalyzes the phosphorolysis of single-stranded polyribonucleotides processively in the 3'- to 5'-direction. The sequence is that of Polyribonucleotide nucleotidyltransferase from Parabacteroides distasonis (strain ATCC 8503 / DSM 20701 / CIP 104284 / JCM 5825 / NCTC 11152).